A 389-amino-acid polypeptide reads, in one-letter code: Maintenance of mitochondrial morphology protein 1-1 (389 aa).

The Lumenal portion of the chain corresponds to 1–22; the sequence is MSQFVLPAVASEGIINWPFLTG. A helical membrane pass occupies residues 23–43; that stretch reads FMLGQFSVGLVLLIFVRFFIF. Residues 44–389 lie on the Cytoplasmic side of the membrane; that stretch reads SDQTEPDINT…YRSLQTSPRR (346 aa). In terms of domain architecture, SMP-LTD spans 83–278; it reads QPESLDWFSV…YPEYQQFELP (196 aa). Disordered regions lie at residues 283 to 345 and 360 to 389; these read KTSA…PKFI and FYEM…SPRR. Over residues 330 to 341 the composition is skewed to polar residues; the sequence is MSMSSQRPNINN.

Belongs to the MMM1 family. As to quaternary structure, homodimer. Component of the ER-mitochondria encounter structure (ERMES) or MDM complex, composed of MMM1, MDM10, MDM12 and MDM34. An MMM1 homodimer associates with one molecule of MDM12 on each side in a pairwise head-to-tail manner, and the SMP-LTD domains of MMM1 and MDM12 generate a continuous hydrophobic tunnel for phospholipid trafficking.

The protein localises to the endoplasmic reticulum membrane. Its function is as follows. Component of the ERMES/MDM complex, which serves as a molecular tether to connect the endoplasmic reticulum (ER) and mitochondria. Components of this complex are involved in the control of mitochondrial shape and protein biogenesis, and function in nonvesicular lipid trafficking between the ER and mitochondria. The MDM12-MMM11 subcomplex functions in the major beta-barrel assembly pathway that is responsible for biogenesis of all outer membrane beta-barrel proteins, and acts in a late step after the SAM complex. The MDM10-MDM12-MMM1 subcomplex further acts in the TOM40-specific pathway after the action of the MDM12-MMM1 complex. Essential for establishing and maintaining the structure of mitochondria and maintenance of mtDNA nucleoids. In Yarrowia lipolytica (strain CLIB 122 / E 150) (Yeast), this protein is Maintenance of mitochondrial morphology protein 1-1.